The sequence spans 325 residues: Lipoyl synthase (325 aa).

The disordered stretch occupies residues 1-24; it reads MPIAPDRVRHPEKANRPDNPIQRK. The [4Fe-4S] cluster site is built by Cys-54, Cys-59, Cys-65, Cys-80, Cys-84, Cys-87, and Ser-293. Residues 66–282 form the Radical SAM core domain; sequence WKKKHATFMI…VTVGRGKGFL (217 aa).

This sequence belongs to the radical SAM superfamily. Lipoyl synthase family. [4Fe-4S] cluster is required as a cofactor.

It is found in the cytoplasm. The enzyme catalyses [[Fe-S] cluster scaffold protein carrying a second [4Fe-4S](2+) cluster] + N(6)-octanoyl-L-lysyl-[protein] + 2 oxidized [2Fe-2S]-[ferredoxin] + 2 S-adenosyl-L-methionine + 4 H(+) = [[Fe-S] cluster scaffold protein] + N(6)-[(R)-dihydrolipoyl]-L-lysyl-[protein] + 4 Fe(3+) + 2 hydrogen sulfide + 2 5'-deoxyadenosine + 2 L-methionine + 2 reduced [2Fe-2S]-[ferredoxin]. The protein operates within protein modification; protein lipoylation via endogenous pathway; protein N(6)-(lipoyl)lysine from octanoyl-[acyl-carrier-protein]: step 2/2. Its function is as follows. Catalyzes the radical-mediated insertion of two sulfur atoms into the C-6 and C-8 positions of the octanoyl moiety bound to the lipoyl domains of lipoate-dependent enzymes, thereby converting the octanoylated domains into lipoylated derivatives. This Rhodospirillum centenum (strain ATCC 51521 / SW) protein is Lipoyl synthase.